Reading from the N-terminus, the 330-residue chain is D-lactate dehydrogenase (330 aa).

NAD(+)-binding positions include 155-156 (RI), aspartate 175, 206-207 (MP), asparagine 212, 233-235 (MAR), and aspartate 259. The active site involves arginine 235. Glutamate 264 is a catalytic residue. The active-site Proton donor is histidine 296.

This sequence belongs to the D-isomer specific 2-hydroxyacid dehydrogenase family.

The enzyme catalyses (R)-lactate + NAD(+) = pyruvate + NADH + H(+). In Streptococcus agalactiae serotype V (strain ATCC BAA-611 / 2603 V/R), this protein is D-lactate dehydrogenase (ldhD).